The chain runs to 359 residues: DNA replication and repair protein RecF (359 aa).

Residue 30–37 (GPNGSGKT) coordinates ATP.

This sequence belongs to the RecF family.

It localises to the cytoplasm. The RecF protein is involved in DNA metabolism; it is required for DNA replication and normal SOS inducibility. RecF binds preferentially to single-stranded, linear DNA. It also seems to bind ATP. The protein is DNA replication and repair protein RecF of Aliivibrio salmonicida (strain LFI1238) (Vibrio salmonicida (strain LFI1238)).